The chain runs to 833 residues: Histone deacetylase HDA1 (833 aa).

The segment covering 1 to 13 has biased composition (basic and acidic residues); the sequence is MSTGQEEHLDSKL. 2 disordered regions span residues 1–40 and 760–791; these read MSTGQEEHLDSKLENQISEEENQSQNQNFPTAIEDSIQAS and NGNGNGNNGNSSNGGGNKSADSNGHDDFSKRP. A coiled-coil region spans residues 5 to 52; it reads QEEHLDSKLENQISEEENQSQNQNFPTAIEDSIQASIEKLDEVDDEIN. The span at 760 to 776 shows a compositional bias: gly residues; that stretch reads NGNGNGNNGNSSNGGGN.

It belongs to the histone deacetylase family. HD type 2 subfamily. Interacts with BRG1.

It localises to the nucleus. The enzyme catalyses N(6)-acetyl-L-lysyl-[histone] + H2O = L-lysyl-[histone] + acetate. Its function is as follows. Responsible for the deacetylation of lysine residues on the N-terminal part of the core histones (H2A, H2B, H3 and H4). Histone deacetylation gives a tag for epigenetic repression and plays an important role in transcriptional regulation, cell cycle progression and developmental events. Histone deacetylases act via the formation of large multiprotein complexes. Deacetylates the YNG2 subunit of NuA4 histone acetyltransferase (HAT) module, leading to the reduction of YNG2 and NuA4 HAT at the promoters of hypha-specific genes. Plays a key role in the regulation of filamentous growth and virulence. Involved in the switch between two heritable states, the white and opaque states. These two cell types differ in many characteristics, including cell structure, mating competence, and virulence. Each state is heritable for many generations, and switching between states occurs stochastically at low frequency. In Candida albicans (strain SC5314 / ATCC MYA-2876) (Yeast), this protein is Histone deacetylase HDA1 (HDA1).